The sequence spans 481 residues: Glutamate--tRNA ligase (481 aa).

Positions 9–19 (PSPTGNLHIGT) match the 'HIGH' region motif. The 'KMSKS' region signature appears at 247–251 (KLSKR). An ATP-binding site is contributed by lysine 250.

The protein belongs to the class-I aminoacyl-tRNA synthetase family. Glutamate--tRNA ligase type 1 subfamily. In terms of assembly, monomer.

The protein resides in the cytoplasm. It carries out the reaction tRNA(Glu) + L-glutamate + ATP = L-glutamyl-tRNA(Glu) + AMP + diphosphate. Functionally, catalyzes the attachment of glutamate to tRNA(Glu) in a two-step reaction: glutamate is first activated by ATP to form Glu-AMP and then transferred to the acceptor end of tRNA(Glu). The sequence is that of Glutamate--tRNA ligase from Nostoc punctiforme (strain ATCC 29133 / PCC 73102).